The chain runs to 309 residues: Aspartate carbamoyltransferase catalytic subunit (309 aa).

2 residues coordinate carbamoyl phosphate: R55 and T56. Residue K85 participates in L-aspartate binding. 3 residues coordinate carbamoyl phosphate: R106, H135, and Q138. The L-aspartate site is built by R168 and R230. L268 and P269 together coordinate carbamoyl phosphate.

It belongs to the aspartate/ornithine carbamoyltransferase superfamily. ATCase family. Heterododecamer (2C3:3R2) of six catalytic PyrB chains organized as two trimers (C3), and six regulatory PyrI chains organized as three dimers (R2).

It carries out the reaction carbamoyl phosphate + L-aspartate = N-carbamoyl-L-aspartate + phosphate + H(+). Its pathway is pyrimidine metabolism; UMP biosynthesis via de novo pathway; (S)-dihydroorotate from bicarbonate: step 2/3. Its function is as follows. Catalyzes the condensation of carbamoyl phosphate and aspartate to form carbamoyl aspartate and inorganic phosphate, the committed step in the de novo pyrimidine nucleotide biosynthesis pathway. The protein is Aspartate carbamoyltransferase catalytic subunit of Photobacterium profundum (strain SS9).